The following is a 72-amino-acid chain: Prokaryotic ubiquitin-like protein Pup (72 aa).

Gly residues predominate over residues 1-11; it reads MAQRDTGGGQQ. The interval 1-41 is disordered; that stretch reads MAQRDTGGGQQRTGRRDDETAEAEVEESGASDLKERHEKLS. A compositionally biased stretch (acidic residues) spans 19–29; that stretch reads ETAEAEVEESG. Positions 22 to 61 form a coiled coil; the sequence is EAEVEESGASDLKERHEKLSEDVDSLLDEIDDVLEENAEE. Positions 28 to 66 are ARC ATPase binding; the sequence is SGASDLKERHEKLSEDVDSLLDEIDDVLEENAEEFVKGY. Basic and acidic residues predominate over residues 32-41; the sequence is DLKERHEKLS. Gln72 bears the Deamidated glutamine mark. An Isoglutamyl lysine isopeptide (Gln-Lys) (interchain with K-? in acceptor proteins) cross-link involves residue Gln72.

The protein belongs to the prokaryotic ubiquitin-like protein family. Strongly interacts with the proteasome-associated ATPase ARC through a hydrophobic interface; the interacting region of Pup lies in its C-terminal half. There is one Pup binding site per ARC hexamer ring. Post-translationally, is modified by deamidation of its C-terminal glutamine to glutamate by the deamidase Dop, a prerequisite to the subsequent pupylation process.

It participates in protein degradation; proteasomal Pup-dependent pathway. Functionally, protein modifier that is covalently attached to lysine residues of substrate proteins, thereby targeting them for proteasomal degradation. The tagging system is termed pupylation. The chain is Prokaryotic ubiquitin-like protein Pup from Parafrankia sp. (strain EAN1pec).